The following is a 352-amino-acid chain: Protein RecA (352 aa).

65–72 (GPESSGKT) is a binding site for ATP. Positions 333 to 352 (VKAAANREPVEEVEEADTDI) are disordered. Over residues 343-352 (EEVEEADTDI) the composition is skewed to acidic residues.

The protein belongs to the RecA family.

The protein localises to the cytoplasm. Its function is as follows. Can catalyze the hydrolysis of ATP in the presence of single-stranded DNA, the ATP-dependent uptake of single-stranded DNA by duplex DNA, and the ATP-dependent hybridization of homologous single-stranded DNAs. It interacts with LexA causing its activation and leading to its autocatalytic cleavage. This is Protein RecA from Pseudomonas fluorescens.